The following is a 105-amino-acid chain: UPF0145 protein lpp0255 (105 aa).

This sequence belongs to the UPF0145 family.

The chain is UPF0145 protein lpp0255 from Legionella pneumophila (strain Paris).